Reading from the N-terminus, the 159-residue chain is Phosphopantetheine adenylyltransferase (159 aa).

Thr-9 is a substrate binding site. Residues 9-10 and His-17 each bind ATP; that span reads TF. Substrate contacts are provided by Lys-41, Leu-73, and Arg-87. ATP-binding positions include 88–90, Glu-98, and 123–129; these read GLR and YSFISST.

Belongs to the bacterial CoaD family. Homohexamer. Mg(2+) is required as a cofactor.

It is found in the cytoplasm. It carries out the reaction (R)-4'-phosphopantetheine + ATP + H(+) = 3'-dephospho-CoA + diphosphate. The protein operates within cofactor biosynthesis; coenzyme A biosynthesis; CoA from (R)-pantothenate: step 4/5. In terms of biological role, reversibly transfers an adenylyl group from ATP to 4'-phosphopantetheine, yielding dephospho-CoA (dPCoA) and pyrophosphate. The chain is Phosphopantetheine adenylyltransferase from Pseudomonas putida (strain GB-1).